Consider the following 315-residue polypeptide: Methionyl-tRNA formyltransferase (315 aa).

113–116 contacts (6S)-5,6,7,8-tetrahydrofolate; it reads SLLP.

Belongs to the Fmt family.

The enzyme catalyses L-methionyl-tRNA(fMet) + (6R)-10-formyltetrahydrofolate = N-formyl-L-methionyl-tRNA(fMet) + (6S)-5,6,7,8-tetrahydrofolate + H(+). Its function is as follows. Attaches a formyl group to the free amino group of methionyl-tRNA(fMet). The formyl group appears to play a dual role in the initiator identity of N-formylmethionyl-tRNA by promoting its recognition by IF2 and preventing the misappropriation of this tRNA by the elongation apparatus. This is Methionyl-tRNA formyltransferase from Shigella sonnei (strain Ss046).